The primary structure comprises 413 residues: Synaptosomal-associated protein 47 (413 aa).

In terms of domain architecture, t-SNARE coiled-coil homology 1 spans 109-171; it reads AANIPSHVTR…DVADRLLTEL (63 aa). The tract at residues 321–342 is disordered; the sequence is RHAASRPKGCTPHRELPTGGQE. Positions 350-412 constitute a t-SNARE coiled-coil homology 2 domain; the sequence is KNLPLFSEGE…DKQNRRMRKL (63 aa).

The protein belongs to the SVAP1 family. Associates with the BLOC-1 complex. Interacts with BLOC1S6. Forms a complex containing SNAP47, VAMP2 and STX1A. In terms of tissue distribution, ubiquitously expressed with the most abundant expression in the brain. In brain, most highly expressed in the glomerular layer of the olfactory bulb, the cortex, striatum, hippocampus, and colliculi (at protein level).

It is found in the endomembrane system. Its subcellular location is the cytoplasm. The protein localises to the perinuclear region. May play a role in intracellular membrane fusion. This is Synaptosomal-associated protein 47 (Snap47) from Mus musculus (Mouse).